Here is a 500-residue protein sequence, read N- to C-terminus: Cytochrome P450 2D15 (500 aa).

A heme-binding site is contributed by Cys446.

This sequence belongs to the cytochrome P450 family. The cofactor is heme. As to expression, liver. Also detected in several other tissues.

Its subcellular location is the endoplasmic reticulum membrane. It is found in the microsome membrane. It carries out the reaction an organic molecule + reduced [NADPH--hemoprotein reductase] + O2 = an alcohol + oxidized [NADPH--hemoprotein reductase] + H2O + H(+). Functionally, high activity for the hydroxylation of bunitrolol and imipramine; low activity on debrisoquine. The sequence is that of Cytochrome P450 2D15 (CYP2D15) from Canis lupus familiaris (Dog).